We begin with the raw amino-acid sequence, 380 residues long: Probable dual-specificity RNA methyltransferase RlmN (380 aa).

Residue E112 is the Proton acceptor of the active site. A Radical SAM core domain is found at 118-358 (YPDRVTACLS…TTVRDTRGRE (241 aa)). A disulfide bridge links C125 with C363. [4Fe-4S] cluster is bound by residues C132, C136, and C139. S-adenosyl-L-methionine contacts are provided by residues 187–188 (GE), S221, 244–246 (SLH), and N320. C363 acts as the S-methylcysteine intermediate in catalysis.

It belongs to the radical SAM superfamily. RlmN family. The cofactor is [4Fe-4S] cluster.

The protein resides in the cytoplasm. The catalysed reaction is adenosine(2503) in 23S rRNA + 2 reduced [2Fe-2S]-[ferredoxin] + 2 S-adenosyl-L-methionine = 2-methyladenosine(2503) in 23S rRNA + 5'-deoxyadenosine + L-methionine + 2 oxidized [2Fe-2S]-[ferredoxin] + S-adenosyl-L-homocysteine. It carries out the reaction adenosine(37) in tRNA + 2 reduced [2Fe-2S]-[ferredoxin] + 2 S-adenosyl-L-methionine = 2-methyladenosine(37) in tRNA + 5'-deoxyadenosine + L-methionine + 2 oxidized [2Fe-2S]-[ferredoxin] + S-adenosyl-L-homocysteine. Specifically methylates position 2 of adenine 2503 in 23S rRNA and position 2 of adenine 37 in tRNAs. This Salinispora arenicola (strain CNS-205) protein is Probable dual-specificity RNA methyltransferase RlmN.